A 689-amino-acid polypeptide reads, in one-letter code: Elongation factor G (689 aa).

Residues 8–283 (SKCRNIGIMA…AVVDFLPAPN (276 aa)) form the tr-type G domain. GTP-binding positions include 17-24 (AHIDAGKT), 81-85 (DTPGH), and 135-138 (NKMD).

Belongs to the TRAFAC class translation factor GTPase superfamily. Classic translation factor GTPase family. EF-G/EF-2 subfamily.

The protein resides in the cytoplasm. Its function is as follows. Catalyzes the GTP-dependent ribosomal translocation step during translation elongation. During this step, the ribosome changes from the pre-translocational (PRE) to the post-translocational (POST) state as the newly formed A-site-bound peptidyl-tRNA and P-site-bound deacylated tRNA move to the P and E sites, respectively. Catalyzes the coordinated movement of the two tRNA molecules, the mRNA and conformational changes in the ribosome. The polypeptide is Elongation factor G (Ehrlichia ruminantium (strain Welgevonden)).